The chain runs to 42 residues: Beta-2-microglobulin (42 aa).

The Ig-like C1-type domain maps to 5–42; that stretch reads PKIQVYSRHPAZBGKPBFLBCYVSGFHPXZIZIBLLKB.

Heterodimer of an alpha chain and a beta chain. Beta-2-microglobulin is the beta-chain of major histocompatibility complex class I molecules.

The protein localises to the secreted. Functionally, component of the class I major histocompatibility complex (MHC). Involved in the presentation of peptide antigens to the immune system. This chain is Beta-2-microglobulin (B2M), found in Canis lupus familiaris (Dog).